Here is a 337-residue protein sequence, read N- to C-terminus: GTPase Obg (337 aa).

An Obg domain is found at 1–158 (MFIDEVRILV…KRLRLELKLL (158 aa)). 2 stretches are compositionally biased toward basic and acidic residues: residues 61–74 (NPEH…HGEG) and 137–146 (PTEHEPGRPG). Disordered stretches follow at residues 61–83 (NPEH…AEGR) and 119–146 (GGRG…GRPG). Residues 159 to 330 (ADVGLVGFPN…LKHAMADRVL (172 aa)) form the OBG-type G domain. GTP-binding positions include 165-172 (GFPNAGKS), 190-194 (FTTLE), 212-215 (DIPG), 282-285 (TKMD), and 311-313 (SSA). Residues Ser172 and Thr192 each contribute to the Mg(2+) site.

It belongs to the TRAFAC class OBG-HflX-like GTPase superfamily. OBG GTPase family. As to quaternary structure, monomer. Mg(2+) serves as cofactor.

The protein localises to the cytoplasm. In terms of biological role, an essential GTPase which binds GTP, GDP and possibly (p)ppGpp with moderate affinity, with high nucleotide exchange rates and a fairly low GTP hydrolysis rate. Plays a role in control of the cell cycle, stress response, ribosome biogenesis and in those bacteria that undergo differentiation, in morphogenesis control. This Solibacter usitatus (strain Ellin6076) protein is GTPase Obg.